The following is a 251-amino-acid chain: Ubiquinone/menaquinone biosynthesis C-methyltransferase UbiE (251 aa).

S-adenosyl-L-methionine-binding positions include T74, D95, and 123 to 124 (NA).

The protein belongs to the class I-like SAM-binding methyltransferase superfamily. MenG/UbiE family.

It carries out the reaction a 2-demethylmenaquinol + S-adenosyl-L-methionine = a menaquinol + S-adenosyl-L-homocysteine + H(+). It catalyses the reaction a 2-methoxy-6-(all-trans-polyprenyl)benzene-1,4-diol + S-adenosyl-L-methionine = a 5-methoxy-2-methyl-3-(all-trans-polyprenyl)benzene-1,4-diol + S-adenosyl-L-homocysteine + H(+). Its pathway is quinol/quinone metabolism; menaquinone biosynthesis; menaquinol from 1,4-dihydroxy-2-naphthoate: step 2/2. It participates in cofactor biosynthesis; ubiquinone biosynthesis. Its function is as follows. Methyltransferase required for the conversion of demethylmenaquinol (DMKH2) to menaquinol (MKH2) and the conversion of 2-polyprenyl-6-methoxy-1,4-benzoquinol (DDMQH2) to 2-polyprenyl-3-methyl-6-methoxy-1,4-benzoquinol (DMQH2). In Marinomonas sp. (strain MWYL1), this protein is Ubiquinone/menaquinone biosynthesis C-methyltransferase UbiE.